The primary structure comprises 782 residues: E3 UFM1-protein ligase 1 homolog (782 aa).

A disordered region spans residues 404-478 (NVSTQELEDE…SRGGGGASKK (75 aa)).

Belongs to the UFL1 family.

Its function is as follows. E3 UFM1-protein ligase that mediates ufmylation of target proteins. The chain is E3 UFM1-protein ligase 1 homolog from Drosophila melanogaster (Fruit fly).